The primary structure comprises 2525 residues: Highly reducing polyketide synthase cm3B (2525 aa).

Residues 1-10 show a composition bias toward polar residues; that stretch reads MQSDTNNSPL. A disordered region spans residues 1-29; that stretch reads MQSDTNNSPLSWEELRSGAASSDANSSPP. A Ketosynthase family 3 (KS3) domain is found at 29–450; the sequence is PEPIAIIGMS…GTNAHVVVDA (422 aa). Residues Cys202, His336, and His376 each act as for beta-ketoacyl synthase activity in the active site. The interval 560–895 is malonyl-CoA:ACP transacylase (MAT) domain; the sequence is VFSGQGSQYA…FLECLGALHV (336 aa). The interval 949-1087 is N-terminal hotdog fold; sequence HELLGTFAHD…GLVHAETQAA (139 aa). The segment at 949–1252 is dehydratase (DH) domain; that stretch reads HELLGTFAHD…AKGVHTTTLP (304 aa). Residues 949 to 1257 form the PKS/mFAS DH domain; sequence HELLGTFAHD…TTTLPGDTGL (309 aa). His981 acts as the Proton acceptor; for dehydratase activity in catalysis. The tract at residues 1107-1257 is C-terminal hotdog fold; the sequence is VHEVTPQKLY…TTTLPGDTGL (151 aa). The active-site Proton donor; for dehydratase activity is Asp1169. The methyltransferase (CMet) domain stretch occupies residues 1399–1504; that stretch reads LEVGAGTASA…KKLLKPGGKF (106 aa). Positions 1799 to 2111 are enoyl reductase (ER) domain; it reads GLLESIRWKD…AGKHTGKIVL (313 aa). The region spanning 2411 to 2489 is the Carrier domain; the sequence is AQLLENISQL…ELAKIIAKES (79 aa). Positions 2411 to 2489 are ketoreductase (KR) domain; it reads AQLLENISQL…ELAKIIAKES (79 aa). Ser2449 bears the O-(pantetheine 4'-phosphoryl)serine mark.

Its pathway is secondary metabolite biosynthesis. Highly reducing polyketide synthase; part of the gene cluster that mediates the biosynthesis of beauveriolides I and III, cyclodepsipeptides acting as inhibitors of the acyl-CoA:cholesterol acyltransferase. The HR-PKS cm3B initiates the biosynthesis of beauveriolides by iteratively catalyzing the formation of the linear polyketide chain. The ATP-dependent acetyl-CoA ligase cm3D converts the polyketide carboxylic acid to a CoA thioester which id shuttled to the first T domain in the NRPS cm3A by the acetyltransferase cm3C. Cm3A contains 13 domains and assembles the polyketide chain, L-phenylalanine, L-alanine, and D-leucine (or D-allo-isoleucine) to form beauveriolide I (or beauveriolide III). The production of both beauveriolides I and III suggests the substrate adaptability of cm3B, using different amino acids as substrates. In Cordyceps militaris (strain CM01) (Caterpillar fungus), this protein is Highly reducing polyketide synthase cm3B.